The primary structure comprises 177 residues: Peptide methionine sulfoxide reductase MsrA (177 aa).

The active site involves C14.

The protein belongs to the MsrA Met sulfoxide reductase family.

It carries out the reaction L-methionyl-[protein] + [thioredoxin]-disulfide + H2O = L-methionyl-(S)-S-oxide-[protein] + [thioredoxin]-dithiol. It catalyses the reaction [thioredoxin]-disulfide + L-methionine + H2O = L-methionine (S)-S-oxide + [thioredoxin]-dithiol. Functionally, has an important function as a repair enzyme for proteins that have been inactivated by oxidation. Catalyzes the reversible oxidation-reduction of methionine sulfoxide in proteins to methionine. This Bacillus velezensis (strain DSM 23117 / BGSC 10A6 / LMG 26770 / FZB42) (Bacillus amyloliquefaciens subsp. plantarum) protein is Peptide methionine sulfoxide reductase MsrA.